The sequence spans 592 residues: Laccase PFICI_06862 (592 aa).

The N-terminal stretch at 1–19 is a signal peptide; that stretch reads MYIQTQFASLLLLAGTSLA. A glycan (N-linked (GlcNAc...) asparagine) is linked at Asn26. Plastocyanin-like domains follow at residues 32–142 and 173–350; these read QWSS…WIAP and VVIS…RYPG. Cu cation-binding residues include His78, His80, His123, and His125. Residues Asn370, Asn407, and Asn454 are each glycosylated (N-linked (GlcNAc...) asparagine). One can recognise a Plastocyanin-like 3 domain in the interval 445–563; sequence SDVQGGSMQN…AGQQVVLLEG (119 aa). Cu cation is bound at residue His475. An N-linked (GlcNAc...) asparagine glycan is attached at Asn524.

Belongs to the multicopper oxidase family.

Its subcellular location is the cell surface. It participates in pigment biosynthesis; melanin biosynthesis. Its function is as follows. Laccase involved the biosynthesis of dihydroxynaphthalene (DHN)-melanin, a bluish-green pigment forming a dark layer in the conidial wall that protects the conidia from UV radiations. The first step of the pathway is the production of the pentaketide 1,3,6,8-tetrahydroxynaphthalene (1,3,6,8-THN or T4HN) by the polyketide synthase PfmaE though condensation of acetyl-CoA with malonyl-CoA. T4HN is not stable and easily oxidizes into the stable form flaviolin. T4HN is also substrate of the hydroxynaphthalene reductase PfmaG to yield scytalone. The scytalone dehydratase PfmaJ then reduces scytalone to 1,3,8-THN. 1,3,8-THN is then substrate of the hydroxynaphthalene reductase PfmaI to yield vermelone. Vermelone is further converted by the multicopper oxidase PfmaD to 1,8-DHN. Finally the laccase PFICI_06862 transforms 1,8-DHN to DHN-melanin. The roles of the 5-oxoprolinase PfmaA and the proline iminopeptidase PfmaB within the cluster have not been elucidated yet. The chain is Laccase PFICI_06862 from Pestalotiopsis fici (strain W106-1 / CGMCC3.15140).